A 198-amino-acid chain; its full sequence is dITP/XTP pyrophosphatase (198 aa).

Thr8–Lys13 provides a ligand contact to substrate. Asp69 (proton acceptor) is an active-site residue. A Mg(2+)-binding site is contributed by Asp69. Residues Ser70, Phe152–Asp155, Lys175, and His180–Arg181 contribute to the substrate site.

It belongs to the HAM1 NTPase family. As to quaternary structure, homodimer. Mg(2+) serves as cofactor.

The catalysed reaction is XTP + H2O = XMP + diphosphate + H(+). The enzyme catalyses dITP + H2O = dIMP + diphosphate + H(+). It carries out the reaction ITP + H2O = IMP + diphosphate + H(+). In terms of biological role, pyrophosphatase that catalyzes the hydrolysis of nucleoside triphosphates to their monophosphate derivatives, with a high preference for the non-canonical purine nucleotides XTP (xanthosine triphosphate), dITP (deoxyinosine triphosphate) and ITP. Seems to function as a house-cleaning enzyme that removes non-canonical purine nucleotides from the nucleotide pool, thus preventing their incorporation into DNA/RNA and avoiding chromosomal lesions. The sequence is that of dITP/XTP pyrophosphatase from Shouchella clausii (strain KSM-K16) (Alkalihalobacillus clausii).